Here is a 365-residue protein sequence, read N- to C-terminus: Short-chain dehydrogenase iccH (365 aa).

NADP(+) is bound by residues Leu-16, Arg-52, and Asp-70. Asn-90 is a glycosylation site (N-linked (GlcNAc...) asparagine). The NADP(+) site is built by Asn-102, Tyr-221, Lys-225, and Ser-260. The active-site Proton donor is Tyr-221. The Lowers pKa of active site Tyr role is filled by Lys-225. Residues 267-287 (IWVMFLLMKFVLPLLAPLAVW) form a helical membrane-spanning segment. Asn-291 and Asn-324 each carry an N-linked (GlcNAc...) asparagine glycan.

This sequence belongs to the short-chain dehydrogenases/reductases (SDR) family.

It localises to the membrane. The protein operates within mycotoxin biosynthesis. In terms of biological role, NADH-dependent flavin oxidoreductase; part of the gene cluster that mediates the biosynthesis of ilicicolin H, a 4-hydroxy-2-pyridonealkaloid that has potent and broad antifungal activities by inhibiting the mitochondrial respiration chain. IccA to iccE are sufficient for ilicicolin H biosynthesis and the roles of the remaining enzymes, iccF, iccG and iccH within the pathway have still to be determined. The biosynthesis of ilicicolin H starts with formation of the tetramic acid by the hybrid PKS-NRPS synthetase iccA with the partnering trans-enoyl reductase iccB since iccA lacks a designated enoylreductase (ER) domain. The cytochrome P450 monooxygenase iccC then catalyzes the ring expansion of the tetramate to the acyclic 2-pyridone. The pericyclase iccD further converts the acyclic 2-pyridone into 8-epi-ilicicolin H. Finally, the epimerase iccE converts 8-epi-ilicicolin H into ilicicolin H via epimerizationd. This Talaromyces variabilis (Penicillium variabile) protein is Short-chain dehydrogenase iccH.